Consider the following 110-residue polypeptide: Large ribosomal subunit protein uL24 (110 aa).

It belongs to the universal ribosomal protein uL24 family. In terms of assembly, part of the 50S ribosomal subunit.

One of two assembly initiator proteins, it binds directly to the 5'-end of the 23S rRNA, where it nucleates assembly of the 50S subunit. Functionally, one of the proteins that surrounds the polypeptide exit tunnel on the outside of the subunit. The sequence is that of Large ribosomal subunit protein uL24 from Chloroflexus aggregans (strain MD-66 / DSM 9485).